The chain runs to 691 residues: Seven transmembrane domain-containing tyrosine-protein kinase 1 (691 aa).

The Extracellular segment spans residues 1–33 (MDTSCVSINQCGFCTYLFNRSIPLAGEGDGAIM). Residues 34–54 (FNTMVDSMALGYIFSALYLLF) traverse the membrane as a helical segment. The Cytoplasmic portion of the chain corresponds to 55–126 (RLQRSYTYLQ…PRIINSTYFK (72 aa)). Residues 127–144 (YTLFVSLWLAFEGLLLLF) form a helical membrane-spanning segment. Topologically, residues 145–153 (LPPNSLAYP) are extracellular. Residues 154–176 (AFVIIVGTGHIVTDNWVLVFLYG) form a helical membrane-spanning segment. The Cytoplasmic segment spans residues 177-186 (KEDDRFSARR). Residues 187-207 (SFYSCTLLYLIICCTTLASFF) traverse the membrane as a helical segment. Residues 208 to 227 (DDQTMCKKNDCQTFMFQDEY) are Extracellular-facing. Residues 228–248 (TSLAITVASLVVYTIVLGMTI) traverse the membrane as a helical segment. Residues 249 to 258 (KRSFLRPTGR) lie on the Cytoplasmic side of the membrane. A helical transmembrane segment spans residues 259–279 (IWLLFLMGYNCISSVGALLNI). Topologically, residues 280-284 (LDVDA) are extracellular. The helical transmembrane segment at 285–305 (GYCFLGIAAIIYSFSYGPLLF) threads the bilayer. The Cytoplasmic portion of the chain corresponds to 306–691 (RTCGNDTNLL…GAEEFHYIDG (386 aa)). One can recognise a Protein kinase domain in the interval 363–634 (FKFGQVIGEG…ANVPISNTYV (272 aa)). ATP-binding positions include 369–377 (IGEGYFGEV) and Lys-390. Asp-493 serves as the catalytic Proton acceptor.

Belongs to the protein kinase superfamily. TKL Tyr protein kinase family.

Its subcellular location is the membrane. It carries out the reaction L-tyrosyl-[protein] + ATP = O-phospho-L-tyrosyl-[protein] + ADP + H(+). In Dictyostelium discoideum (Social amoeba), this protein is Seven transmembrane domain-containing tyrosine-protein kinase 1 (7tmk1).